The primary structure comprises 110 residues: Prothymosin alpha (110 aa).

Met1 is modified (N-acetylmethionine). The segment at 1–110 (MSDAAVDTSS…TKKQKTDEDD (110 aa)) is disordered. Ser2 is modified (N-acetylserine; in Prothymosin alpha, N-terminally processed). Phosphoserine is present on Ser2. Thr8 carries the post-translational modification Phosphothreonine; by CK2. Phosphoserine occurs at positions 9 and 10. Thr13 and Thr14 each carry phosphothreonine; by CK2. A compositionally biased stretch (basic and acidic residues) spans 13–31 (TTKDLKEKKEVVEEAENGR). Lys15 is modified (N6-acetyllysine; alternate). N6-succinyllysine; alternate is present on Lys15. Low complexity predominate over residues 32 to 41 (EAPANGNANE). The segment covering 42–83 (ENGEQEADNEVDEEEEEGGEEEEEEEEGDGEEEDGDEDEEAE) has biased composition (acidic residues). Basic and acidic residues predominate over residues 100-110 (DTKKQKTDEDD). Thr101 is modified (phosphothreonine). Lys102 is modified (N6-acetyllysine; alternate). A Glycyl lysine isopeptide (Lys-Gly) (interchain with G-Cter in SUMO2); alternate cross-link involves residue Lys102. Phosphothreonine is present on Thr106.

It belongs to the pro/parathymosin family. Interacts with NUPR1; regulates apoptotic process. Covalently linked to a small RNA of about 20 nucleotides.

It localises to the nucleus. Functionally, prothymosin alpha may mediate immune function by conferring resistance to certain opportunistic infections. The sequence is that of Prothymosin alpha (PTMA) from Bos taurus (Bovine).